Here is a 447-residue protein sequence, read N- to C-terminus: Succinate--CoA ligase [ADP-forming] subunit beta, mitochondrial (447 aa).

Residues 1–34 (MFKLGRNRALASAFAATSRAPLASRLPSVSQQQR) constitute a mitochondrion transit peptide. The ATP-grasp domain maps to 45–287 (ADLLRQYGIG…TTQEDPDEVR (243 aa)). ATP contacts are provided by residues K82, 89 to 91 (GRG), and E150. Mg(2+) contacts are provided by N242 and D256. Substrate contacts are provided by residues N307 and 364-366 (GIV).

This sequence belongs to the succinate/malate CoA ligase beta subunit family. Heterodimer of an alpha and a beta subunit. Mg(2+) serves as cofactor.

The protein localises to the mitochondrion. It catalyses the reaction succinate + ATP + CoA = succinyl-CoA + ADP + phosphate. The protein operates within carbohydrate metabolism; tricarboxylic acid cycle; succinate from succinyl-CoA (ligase route): step 1/1. Functionally, succinyl-CoA synthetase functions in the citric acid cycle (TCA), coupling the hydrolysis of succinyl-CoA to the synthesis of ATP and thus represents the only step of substrate-level phosphorylation in the TCA. The beta subunit provides nucleotide specificity of the enzyme and binds the substrate succinate, while the binding sites for coenzyme A and phosphate are found in the alpha subunit. This chain is Succinate--CoA ligase [ADP-forming] subunit beta, mitochondrial, found in Neurospora crassa (strain ATCC 24698 / 74-OR23-1A / CBS 708.71 / DSM 1257 / FGSC 987).